The sequence spans 542 residues: Carbamoyl phosphate synthase large chain, C-terminal section (542 aa).

Residues M1 to E389 form a carbamoyl phosphate synthetic domain region. The region spanning S122–L316 is the ATP-grasp domain. Residues R158, R197, I199, E204, G230, V231, H232, S233, Q273, and E287 each coordinate ATP. Mg(2+) is bound by residues Q273, E287, and N289. 3 residues coordinate Mn(2+): Q273, E287, and N289. The 155-residue stretch at H388–G542 folds into the MGS-like domain. The allosteric domain stretch occupies residues L390–G542.

It belongs to the CarB family. As to quaternary structure, composed of two chains; the small (or glutamine) chain promotes the hydrolysis of glutamine to ammonia, which is used by the large (or ammonia) chain to synthesize carbamoyl phosphate. Tetramer of heterodimers (alpha,beta)4. Mg(2+) is required as a cofactor. It depends on Mn(2+) as a cofactor.

It carries out the reaction hydrogencarbonate + L-glutamine + 2 ATP + H2O = carbamoyl phosphate + L-glutamate + 2 ADP + phosphate + 2 H(+). The enzyme catalyses hydrogencarbonate + NH4(+) + 2 ATP = carbamoyl phosphate + 2 ADP + phosphate + 2 H(+). It functions in the pathway amino-acid biosynthesis; L-arginine biosynthesis; carbamoyl phosphate from bicarbonate: step 1/1. It participates in pyrimidine metabolism; UMP biosynthesis via de novo pathway; (S)-dihydroorotate from bicarbonate: step 1/3. Large subunit of the glutamine-dependent carbamoyl phosphate synthetase (CPSase). CPSase catalyzes the formation of carbamoyl phosphate from the ammonia moiety of glutamine, carbonate, and phosphate donated by ATP, constituting the first step of 2 biosynthetic pathways, one leading to arginine and/or urea and the other to pyrimidine nucleotides. The large subunit (synthetase) binds the substrates ammonia (free or transferred from glutamine from the small subunit), hydrogencarbonate and ATP and carries out an ATP-coupled ligase reaction, activating hydrogencarbonate by forming carboxy phosphate which reacts with ammonia to form carbamoyl phosphate. In Methanopyrus kandleri (strain AV19 / DSM 6324 / JCM 9639 / NBRC 100938), this protein is Carbamoyl phosphate synthase large chain, C-terminal section (carB2).